We begin with the raw amino-acid sequence, 108 residues long: Small ribosomal subunit protein bS18c (108 aa).

Basic residues-rich tracts occupy residues 1-19 (MDKS…RRRL) and 97-108 (RARKKKIGLLLN). 2 disordered regions span residues 1–23 (MDKS…PPIG) and 83–108 (QFER…LLLN).

The protein belongs to the bacterial ribosomal protein bS18 family. As to quaternary structure, part of the 30S ribosomal subunit.

It localises to the plastid. The protein resides in the chloroplast. The sequence is that of Small ribosomal subunit protein bS18c from Illicium oligandrum (Star anise).